The chain runs to 386 residues: Succinate--CoA ligase [ADP-forming] subunit beta (386 aa).

Positions Lys9–Arg244 constitute an ATP-grasp domain. Residues Lys46, Gly53–Gly55, Glu99, Cys102, and Glu107 each bind ATP. 2 residues coordinate Mg(2+): Asn199 and Asp213. Substrate contacts are provided by residues Asn264 and Gly321–Met323.

This sequence belongs to the succinate/malate CoA ligase beta subunit family. Heterotetramer of two alpha and two beta subunits. Mg(2+) is required as a cofactor.

It catalyses the reaction succinate + ATP + CoA = succinyl-CoA + ADP + phosphate. It carries out the reaction GTP + succinate + CoA = succinyl-CoA + GDP + phosphate. It functions in the pathway carbohydrate metabolism; tricarboxylic acid cycle; succinate from succinyl-CoA (ligase route): step 1/1. Its function is as follows. Succinyl-CoA synthetase functions in the citric acid cycle (TCA), coupling the hydrolysis of succinyl-CoA to the synthesis of either ATP or GTP and thus represents the only step of substrate-level phosphorylation in the TCA. The beta subunit provides nucleotide specificity of the enzyme and binds the substrate succinate, while the binding sites for coenzyme A and phosphate are found in the alpha subunit. The chain is Succinate--CoA ligase [ADP-forming] subunit beta from Rickettsia typhi (strain ATCC VR-144 / Wilmington).